The chain runs to 122 residues: Small ribosomal subunit protein uS12 (122 aa).

This sequence belongs to the universal ribosomal protein uS12 family. As to quaternary structure, part of the 30S ribosomal subunit. Contacts proteins S8 and S17. May interact with IF1 in the 30S initiation complex.

Its function is as follows. With S4 and S5 plays an important role in translational accuracy. In terms of biological role, interacts with and stabilizes bases of the 16S rRNA that are involved in tRNA selection in the A site and with the mRNA backbone. Located at the interface of the 30S and 50S subunits, it traverses the body of the 30S subunit contacting proteins on the other side and probably holding the rRNA structure together. The combined cluster of proteins S8, S12 and S17 appears to hold together the shoulder and platform of the 30S subunit. This chain is Small ribosomal subunit protein uS12, found in Corynebacterium efficiens (strain DSM 44549 / YS-314 / AJ 12310 / JCM 11189 / NBRC 100395).